The primary structure comprises 280 residues: MTTRILGVVQLDQRRLTDDLAVLAKSNFSSEYSDFACGRWEFCMLRNQSGKQEEQRVVVHETPALATPLGQSLPYLNELLDNHFDRDSIRYARIIRISENACIIPHRDYLELEGKFIRVHLVLDTNEKCSNTEENNIFHMGRGEIWFLDASLPHSAGCFSPTPRLHLVVDIEGTRSLEEVAINVEQPSARNATVDTRKEWTDETLESVLGFSEIISEANYREIVAILAKLHFFHKVHCVDMYGWLKEICRRRGEPALIEKANSLERFYLIDRAAGEVMTY.

Residues H106, D108, and H154 each coordinate Fe cation. Position 164 (R164) interacts with 2-oxoglutarate.

The protein belongs to the L-proline cis-4-/cis-3-hydroxylase family. It depends on Fe(2+) as a cofactor.

The enzyme catalyses L-proline + 2-oxoglutarate + O2 = cis-4-hydroxy-L-proline + succinate + CO2. Inhibited by metal ions such as Co(2+), Zn(2+), Cu(2+) or Ni(2+). Is also inhibited by EDTA or diethylpyrocarbonate (DEPC) in vitro. Unlike the procollagen-proline cis-3- and trans-4-hydroxylases from mammals, does not necessarily require L-ascorbate for activity although it does increase the activity of the enzyme. Dioxygenase that catalyzes the 2-oxoglutarate-dependent selective hydroxylation of free L-proline to cis-4-hydroxy-L-proline (cis-4-Hyp). This chain is L-proline cis-4-hydroxylase, found in Mesorhizobium japonicum (strain LMG 29417 / CECT 9101 / MAFF 303099) (Mesorhizobium loti (strain MAFF 303099)).